Here is a 415-residue protein sequence, read N- to C-terminus: Tyrosine--tRNA ligase (415 aa).

Residue Y34 participates in L-tyrosine binding. The 'HIGH' region motif lies at 39-48 (PSADSLHLGN). L-tyrosine-binding residues include Y162 and Q166. The 'KMSKS' region signature appears at 224-228 (KFGKS). Residue K227 coordinates ATP. The S4 RNA-binding domain maps to 346–413 (IKIIDLLNLA…KRNYFLIVWN (68 aa)).

This sequence belongs to the class-I aminoacyl-tRNA synthetase family. TyrS type 1 subfamily. In terms of assembly, homodimer.

It is found in the cytoplasm. It catalyses the reaction tRNA(Tyr) + L-tyrosine + ATP = L-tyrosyl-tRNA(Tyr) + AMP + diphosphate + H(+). Functionally, catalyzes the attachment of tyrosine to tRNA(Tyr) in a two-step reaction: tyrosine is first activated by ATP to form Tyr-AMP and then transferred to the acceptor end of tRNA(Tyr). This is Tyrosine--tRNA ligase from Ureaplasma urealyticum serovar 10 (strain ATCC 33699 / Western).